The following is a 699-amino-acid chain: Ciliated left-right organizer metallopeptidase (699 aa).

An N-terminal signal peptide occupies residues 1–18; that stretch reads MKMWRLLLLGVATGRCLH. At 19–663 the chain is on the extracellular side; it reads EETQKSVRLL…SLDHNPSMTE (645 aa). H238 is a Zn(2+) binding site. The active site involves E239. H242 and H318 together coordinate Zn(2+). A helical membrane pass occupies residues 664-684; it reads LLLSTGFCLLVLILVGALGTL. The Cytoplasmic portion of the chain corresponds to 685-699; it reads AYQKRAMLQVAPSTT.

This sequence belongs to the peptidase M8 family. Requires Zn(2+) as cofactor. In terms of tissue distribution, specifically expressed in ciliated left-right organizer.

The protein localises to the membrane. Its function is as follows. Putative metalloproteinase that plays a role in left-right patterning process. This Mus musculus (Mouse) protein is Ciliated left-right organizer metallopeptidase.